We begin with the raw amino-acid sequence, 472 residues long: F420-non-reducing hydrogenase subunit A (472 aa).

Ni(2+) is bound by residues cysteine 61, cysteine 64, cysteine 442, and cysteine 445.

The protein belongs to the [NiFe]/[NiFeSe] hydrogenase large subunit family. The F420-non-reducing hydrogenase is composed of three subunits; MvhA, MvhD and MvhG. It forms a complex with the heterodisulfide reductase (hdr). Requires Ni(2+) as cofactor.

Its function is as follows. Part of a complex that provides reducing equivalents for heterodisulfide reductase. This chain is F420-non-reducing hydrogenase subunit A (mvhA), found in Methanothermobacter thermautotrophicus (strain ATCC 29096 / DSM 1053 / JCM 10044 / NBRC 100330 / Delta H) (Methanobacterium thermoautotrophicum).